Here is a 171-residue protein sequence, read N- to C-terminus: Squamosa promoter-binding protein 2 (171 aa).

Disordered regions lie at residues 20-46 and 57-76; these read GDEG…VVKV and KLNL…TASG. A compositionally biased stretch (acidic residues) spans 22-40; it reads EGSDFEEEEEGEDEEEEEQ. The SBP-type zinc finger occupies 82–159; the sequence is QPCCLVENCG…AGHNERRRKS (78 aa). Zn(2+) contacts are provided by cysteine 85, cysteine 90, cysteine 107, histidine 110, cysteine 126, cysteine 129, histidine 133, and cysteine 145. Positions 142 to 158 match the Bipartite nuclear localization signal motif; the sequence is KRSCRRRLAGHNERRRK. Over residues 149 to 158 the composition is skewed to basic residues; it reads LAGHNERRRK. The tract at residues 149-171 is disordered; that stretch reads LAGHNERRRKSSLESHKEGRSPR. The segment covering 159–171 has biased composition (basic and acidic residues); it reads SSLESHKEGRSPR.

The protein resides in the nucleus. Its function is as follows. Probable transcriptional factor. Binds to the promoter of the SQUAMOSA gene. The protein is Squamosa promoter-binding protein 2 (SBP2) of Antirrhinum majus (Garden snapdragon).